Here is a 230-residue protein sequence, read N- to C-terminus: MTTLTARPEAITFDPQQSALIVVDMQNAYATPGGYLDLAGFDVSTTRPVIANIQTAVTAARAAGMLIIWFQNGWDEQYVEAGGPGSPNFHKSNALKTMRKQPQLQGKLLAKGSWDYQLVDELVPQPGDIVLPKPRYSGFFNTPLDSILRSRGIRHLVFTGIATNVCVESTLRDGFFLEYFGVVLEDATHQAGPKFAQKAALFNIETFFGWVSDVETFCDALSPTSFAHIA.

The active-site Proton acceptor is Asp24. The active site involves Lys133. Cys166 functions as the Nucleophile in the catalytic mechanism.

It belongs to the isochorismatase family. RutB subfamily.

It catalyses the reaction (Z)-3-ureidoacrylate + H2O + H(+) = (Z)-3-aminoacrylate + NH4(+) + CO2. It carries out the reaction (Z)-3-ureidoacrylate + H2O = (Z)-3-aminoacrylate + carbamate + H(+). The catalysed reaction is (Z)-2-methylureidoacrylate + H2O + H(+) = (Z)-2-methylaminoacrylate + NH4(+) + CO2. Its function is as follows. Hydrolyzes ureidoacrylate to form aminoacrylate and carbamate. The carbamate hydrolyzes spontaneously, thereby releasing one of the nitrogen atoms of the pyrimidine ring as ammonia and one of its carbon atoms as CO2. This Escherichia coli (strain K12 / MC4100 / BW2952) protein is Ureidoacrylate amidohydrolase RutB.